We begin with the raw amino-acid sequence, 144 residues long: Large ribosomal subunit protein uL16 (144 aa).

It belongs to the universal ribosomal protein uL16 family. As to quaternary structure, part of the 50S ribosomal subunit.

In terms of biological role, binds 23S rRNA and is also seen to make contacts with the A and possibly P site tRNAs. This Heliobacterium modesticaldum (strain ATCC 51547 / Ice1) protein is Large ribosomal subunit protein uL16.